The sequence spans 327 residues: MSEPSPIADPYAYLNIVNNPDGSITRDLSNFPCTAATPDPSPLNPAVSKDLPVNQLKSTWLRLYLPSSAVNEGNVSSQKLPIVVYYHGGGFILCSVDMQLFHDFCSEVARDLNAIVVSPSYRLAPEHRLPAAYDDGVEALDWIKTSDDEWIKSHADFSNVFLMGTSAGGNLAYNVGLRSVDSVSDLSPLQIRGLILHHPFFGGEERSESEIRLMNDQVCPPIVTDVMWDLSLPVGVDRDHEYSNPTVGDGSEKLEKIGRLRWKVMMIGGEDDPMIDLQKDVAKLMKKKGVEVVEHYTGGHVHGAEIRDPSKRKTLFLSIKNFIFSVL.

Positions 87 to 89 match the Involved in the stabilization of the negatively charged intermediate by the formation of the oxyanion hole motif; that stretch reads HGG. The active-site Nucleophile is Ser166. Active-site residues include Asp272 and His302.

Belongs to the 'GDXG' lipolytic enzyme family. In terms of tissue distribution, expressed in roots, stems, flowers and siliques.

It carries out the reaction a carboxylic ester + H2O = an alcohol + a carboxylate + H(+). With respect to regulation, esterase activity measured in vitro with the synthetic substrate p-nitrophenyl acetate (pNPA) is inhibited by strigolactone. Functionally, carboxylesterase that possesses esterase activity in vitro with the synthetic substrate p-nitrophenyl acetate (pNPA). Binds strigolactones, but is not able to hydrolyze them. May be involved in the regulation of shoot branching. In Arabidopsis thaliana (Mouse-ear cress), this protein is Carboxylesterase 20.